The chain runs to 290 residues: Inositol-1-monophosphatase (290 aa).

The Mg(2+) site is built by Glu83, Asp104, Ile106, and Asp107. Glu83 is a binding site for substrate. Residues 106–109, Arg206, and Asp235 each bind substrate; that span reads IDGT. Residue Asp235 participates in Mg(2+) binding.

It belongs to the inositol monophosphatase superfamily. The cofactor is Mg(2+).

The enzyme catalyses a myo-inositol phosphate + H2O = myo-inositol + phosphate. The protein is Inositol-1-monophosphatase (suhB) of Mycobacterium bovis (strain ATCC BAA-935 / AF2122/97).